Consider the following 203-residue polypeptide: NAD(P)H dehydrogenase (quinone) (203 aa).

Residues 3–194 (IMVVYYSAYG…AGANFQGRHV (192 aa)) enclose the Flavodoxin-like domain. Residues 9-14 (SAYGHV) and 82-84 (ARF) each bind FMN. Residue Y11 participates in NAD(+) binding. A substrate-binding site is contributed by W102. Residues 117 to 123 (STGTQHG) and H138 each bind FMN.

The protein belongs to the WrbA family. It depends on FMN as a cofactor.

It catalyses the reaction a quinone + NADH + H(+) = a quinol + NAD(+). The enzyme catalyses a quinone + NADPH + H(+) = a quinol + NADP(+). This Syntrophus aciditrophicus (strain SB) protein is NAD(P)H dehydrogenase (quinone).